Here is a 635-residue protein sequence, read N- to C-terminus: Phosphatidylserine decarboxylase proenzyme 2 (635 aa).

Positions 20-146 (KLQKFRIHRR…VVQEPESTCK (127 aa)) constitute a C2 domain. EF-hand domains lie at 174–209 (TERRFAKRILSIVDYNEDGQLSFSEFSDLIKAFGNL) and 210–245 (VAANKKEELFKAADLNGDGVVTIDELAALLALQQEQ). Ca(2+) contacts are provided by D187, N189, D191, Q193, E198, D223, N225, D227, and E234. Residues D443, H499, and S587 each act as charge relay system; for autoendoproteolytic cleavage activity in the active site. The active-site Schiff-base intermediate with substrate; via pyruvic acid; for decarboxylase activity is the S587. S587 carries the post-translational modification Pyruvic acid (Ser); by autocatalysis.

The protein belongs to the phosphatidylserine decarboxylase family. PSD-B subfamily. Eukaryotic type II sub-subfamily. As to quaternary structure, heterodimer of a large membrane-associated beta subunit and a small pyruvoyl-containing alpha subunit. The cofactor is pyruvate. Is synthesized initially as an inactive proenzyme. Formation of the active enzyme involves a self-maturation process in which the active site pyruvoyl group is generated from an internal serine residue via an autocatalytic post-translational modification. Two non-identical subunits are generated from the proenzyme in this reaction, and the pyruvate is formed at the N-terminus of the alpha chain, which is derived from the carboxyl end of the proenzyme. The autoendoproteolytic cleavage occurs by a canonical serine protease mechanism, in which the side chain hydroxyl group of the serine supplies its oxygen atom to form the C-terminus of the beta chain, while the remainder of the serine residue undergoes an oxidative deamination to produce ammonia and the pyruvoyl prosthetic group on the alpha chain. During this reaction, the Ser that is part of the protease active site of the proenzyme becomes the pyruvoyl prosthetic group, which constitutes an essential element of the active site of the mature decarboxylase. As to expression, highly expressed in flowers and at lower levels in leaves.

The protein localises to the vacuole membrane. It catalyses the reaction a 1,2-diacyl-sn-glycero-3-phospho-L-serine + H(+) = a 1,2-diacyl-sn-glycero-3-phosphoethanolamine + CO2. Its pathway is phospholipid metabolism; phosphatidylethanolamine biosynthesis; phosphatidylethanolamine from CDP-diacylglycerol: step 2/2. In terms of biological role, catalyzes the formation of phosphatidylethanolamine (PtdEtn) from phosphatidylserine (PtdSer). Plays a central role in phospholipid metabolism and in the interorganelle trafficking of phosphatidylserine. Contributes only to a minor proportion of PtdEtn production. The protein is Phosphatidylserine decarboxylase proenzyme 2 (PSD2) of Arabidopsis thaliana (Mouse-ear cress).